We begin with the raw amino-acid sequence, 92 residues long: Beta-2-microglobulin (92 aa).

Residues 2 to 91 (PQIQVYTRHP…VSLNEPKTVI (90 aa)) form the Ig-like C1-type domain. Cysteines 22 and 77 form a disulfide.

The protein belongs to the beta-2-microglobulin family. Heterodimer of an alpha chain and a beta chain. Beta-2-microglobulin is the beta-chain of major histocompatibility complex class I molecules.

It localises to the secreted. Component of the class I major histocompatibility complex (MHC). Involved in the presentation of peptide antigens to the immune system. The chain is Beta-2-microglobulin (B2m) from Mus cervicolor (Fawn-colored mouse).